We begin with the raw amino-acid sequence, 742 residues long: Glycine--tRNA ligase (742 aa).

One can recognise a WHEP-TRS domain in the interval 73–129 (KLAPLRAAVKEYGDLIRDLKAKGAPKIDIDKAVVELKARKRLLEDTEIALAPKEASF). Glu309 contacts glycine. Residues 341–343 (RNE) and 352–353 (RV) each bind ATP. Glu360 is a binding site for glycine. An ATP-binding site is contributed by 467–468 (EC). 586–588 (EPS) contributes to the glycine binding site. ATP is bound at residue Arg593.

It belongs to the class-II aminoacyl-tRNA synthetase family. Homodimer.

Its subcellular location is the cytoplasm. It is found in the cell projection. The protein localises to the axon. The protein resides in the secreted. It localises to the extracellular exosome. The enzyme catalyses tRNA(Gly) + glycine + ATP = glycyl-tRNA(Gly) + AMP + diphosphate. It carries out the reaction 2 ATP + H(+) = P(1),P(4)-bis(5'-adenosyl) tetraphosphate + diphosphate. Catalyzes the ATP-dependent ligation of glycine to the 3'-end of its cognate tRNA, via the formation of an aminoacyl-adenylate intermediate (Gly-AMP). Also produces diadenosine tetraphosphate (Ap4A), a universal pleiotropic signaling molecule needed for cell regulation pathways, by direct condensation of 2 ATPs. Thereby, may play a special role in Ap4A homeostasis. The protein is Glycine--tRNA ligase of Caenorhabditis elegans.